The primary structure comprises 63 residues: MRYTDSRKLTPETDANHKTASPQPIRRISSQTLLGPDGKLIIDHDGQEYLLRKTQAGKLLLTK.

Over residues 1–17 (MRYTDSRKLTPETDANH) the composition is skewed to basic and acidic residues. A disordered region spans residues 1–32 (MRYTDSRKLTPETDANHKTASPQPIRRISSQT). Residues 18-32 (KTASPQPIRRISSQT) show a composition bias toward polar residues.

To Y.enterocolitica HemP.

This is an uncharacterized protein from Escherichia coli (strain K12).